A 945-amino-acid chain; its full sequence is Splicing factor, suppressor of white-apricot homolog (945 aa).

Disordered stretches follow at residues Met1–Thr28 and Asp156–Glu185. Basic and acidic residues-rich tracts occupy residues Ala9 to Ala21 and Pro169 to Ala178. Residues Ile211–Tyr253 form an SURP motif 1 repeat. Residues Ser271 to Leu301 are disordered. A Phosphoserine modification is found at Ser283. Residues Asp284–Gly294 are compositionally biased toward acidic residues. Lys315 is modified (N6-acetyllysine). Disordered regions lie at residues Lys332–Val355 and Ser403–Ile448. A compositionally biased stretch (low complexity) spans Ala335–Pro352. Residues Val412 to Thr426 show a composition bias toward pro residues. The segment covering Ala427–Ala447 has biased composition (low complexity). The SURP motif 2 repeat unit spans residues Val458–Tyr498. Disordered stretches follow at residues Gly512–Val564, Pro589–Arg680, and Asp712–Lys921. The span at Thr514–Thr527 shows a compositional bias: low complexity. A compositionally biased stretch (acidic residues) spans Ala528 to Ala540. Positions Pro589–Asp598 are enriched in basic and acidic residues. 2 positions are modified to phosphoserine: Ser601 and Ser621. Positions Ser615 to Ala630 are enriched in low complexity. A coiled-coil region spans residues Glu632–Leu686. At Thr639 the chain carries Phosphothreonine. Basic and acidic residues-rich tracts occupy residues Leu643 to Glu679 and Lys733 to Glu752. Basic residues-rich tracts occupy residues Lys753–His787 and Thr795–Ala810. The span at His811–Ser821 shows a compositional bias: basic and acidic residues. A phosphoserine mark is found at Ser829 and Ser831. The span at Ser835–Ala861 shows a compositional bias: basic residues. Positions Gln871–Ser894 are enriched in low complexity. Basic and acidic residues predominate over residues Ser895–Gly908. Residues Ser899 and Ser903 each carry the phosphoserine modification. Over residues Gln909–Ser920 the composition is skewed to low complexity.

The protein resides in the nucleus. Functionally, plays a role as an alternative splicing regulator. Regulates its own expression at the level of RNA processing. Also regulates the splicing of fibronectin and CD45 genes. May act, at least in part, by interaction with other R/S-containing splicing factors. Represses the splicing of MAPT/Tau exon 10. The polypeptide is Splicing factor, suppressor of white-apricot homolog (Sfswap) (Mus musculus (Mouse)).